The chain runs to 315 residues: Putative HTH-type transcriptional regulatory protein PH1808 (315 aa).

The region spanning 131-189 (LKALREEHGYSITELAGILGISRKSLQRYEKGESVVSLEVALRLEEVFDEPLVKPIDVL) is the HTH cro/C1-type domain. A DNA-binding region (H-T-H motif) is located at residues 142-161 (ITELAGILGISRKSLQRYEK).

The protein is Putative HTH-type transcriptional regulatory protein PH1808 of Pyrococcus horikoshii (strain ATCC 700860 / DSM 12428 / JCM 9974 / NBRC 100139 / OT-3).